Reading from the N-terminus, the 143-residue chain is Nucleoside diphosphate kinase (143 aa).

Residues K11, F59, R87, T93, R104, and N114 each coordinate ATP. The active-site Pros-phosphohistidine intermediate is the H117.

Belongs to the NDK family. As to quaternary structure, homotetramer. Mg(2+) serves as cofactor.

It localises to the cytoplasm. It catalyses the reaction a 2'-deoxyribonucleoside 5'-diphosphate + ATP = a 2'-deoxyribonucleoside 5'-triphosphate + ADP. The catalysed reaction is a ribonucleoside 5'-diphosphate + ATP = a ribonucleoside 5'-triphosphate + ADP. Functionally, major role in the synthesis of nucleoside triphosphates other than ATP. The ATP gamma phosphate is transferred to the NDP beta phosphate via a ping-pong mechanism, using a phosphorylated active-site intermediate. This chain is Nucleoside diphosphate kinase, found in Salmonella arizonae (strain ATCC BAA-731 / CDC346-86 / RSK2980).